The sequence spans 203 residues: Putative 3-methyladenine DNA glycosylase (203 aa).

It belongs to the DNA glycosylase MPG family.

In Staphylococcus saprophyticus subsp. saprophyticus (strain ATCC 15305 / DSM 20229 / NCIMB 8711 / NCTC 7292 / S-41), this protein is Putative 3-methyladenine DNA glycosylase.